The following is a 73-amino-acid chain: Large ribosomal subunit protein uL24 (73 aa).

The span at 51–65 (DDNPKGGFIHKEKPM) shows a compositional bias: basic and acidic residues. The tract at residues 51-73 (DDNPKGGFIHKEKPMHISNVKKA) is disordered.

This sequence belongs to the universal ribosomal protein uL24 family. Part of the 50S ribosomal subunit.

In terms of biological role, one of two assembly initiator proteins, it binds directly to the 5'-end of the 23S rRNA, where it nucleates assembly of the 50S subunit. Functionally, one of the proteins that surrounds the polypeptide exit tunnel on the outside of the subunit. This Helicobacter pylori (strain Shi470) protein is Large ribosomal subunit protein uL24.